We begin with the raw amino-acid sequence, 121 residues long: Non-structural protein 8 (121 aa).

The N-terminal stretch at 1-15 is a signal peptide; that stretch reads MKLLIVFGLLASVYC. The SARS ORF8 Ig-like domain maps to 19–121; that stretch reads ECSIQECCEN…HDVRVVLDFI (103 aa). Intrachain disulfides connect Cys-25-Cys-90, Cys-37-Cys-102, and Cys-61-Cys-83.

This Bat coronavirus HKU3 (BtCoV) protein is Non-structural protein 8.